The primary structure comprises 75 residues: UPF0150 protein TM_1313 (75 aa).

This sequence belongs to the UPF0150 family.

This chain is UPF0150 protein TM_1313, found in Thermotoga maritima (strain ATCC 43589 / DSM 3109 / JCM 10099 / NBRC 100826 / MSB8).